Here is a 282-residue protein sequence, read N- to C-terminus: NADPH-dependent 7-cyano-7-deazaguanine reductase (282 aa).

Residue 88–90 (IES) coordinates substrate. 90 to 91 (SK) lines the NADPH pocket. The Thioimide intermediate role is filled by Cys190. The Proton donor role is filled by Asp197. Position 229-230 (229-230 (HE)) interacts with substrate. 258 to 259 (RG) provides a ligand contact to NADPH.

This sequence belongs to the GTP cyclohydrolase I family. QueF type 2 subfamily. As to quaternary structure, homodimer.

Its subcellular location is the cytoplasm. It catalyses the reaction 7-aminomethyl-7-carbaguanine + 2 NADP(+) = 7-cyano-7-deazaguanine + 2 NADPH + 3 H(+). It functions in the pathway tRNA modification; tRNA-queuosine biosynthesis. In terms of biological role, catalyzes the NADPH-dependent reduction of 7-cyano-7-deazaguanine (preQ0) to 7-aminomethyl-7-deazaguanine (preQ1). The polypeptide is NADPH-dependent 7-cyano-7-deazaguanine reductase (Salmonella paratyphi C (strain RKS4594)).